Here is a 352-residue protein sequence, read N- to C-terminus: Ion-translocating oxidoreductase complex subunit D (352 aa).

A run of 4 helical transmembrane segments spans residues 20 to 40 (IMLLVLIAALPGIAAQTWFFG), 42 to 62 (GTLFQIVLAAITALVAEAIVL), 69 to 91 (VASHLQDYSALLTGLLLAVSIPP), and 123 to 143 (PAMIGYVVLLISFPVQMTSWL). Residue Thr187 is modified to FMN phosphoryl threonine. 5 consecutive transmembrane segments (helical) span residues 215-235 (LAGVGWQWVNLAWLVGGVFLL), 242-262 (WHIPVSFLLTLALCAALGWLF), 267-287 (LASPQLHLLSGATMLGAFFIL), 301-321 (LIFGALAGVLVWLIRSFGGYP), and 322-342 (DGVAFAVLLANITVPLIDYYT).

The protein belongs to the NqrB/RnfD family. In terms of assembly, the complex is composed of six subunits: RsxA, RsxB, RsxC, RsxD, RsxE and RsxG. The cofactor is FMN.

The protein resides in the cell inner membrane. Its function is as follows. Part of a membrane-bound complex that couples electron transfer with translocation of ions across the membrane. Required to maintain the reduced state of SoxR. The chain is Ion-translocating oxidoreductase complex subunit D from Salmonella typhi.